The sequence spans 462 residues: L-seryl-tRNA(Sec) selenium transferase (462 aa).

Residue K293 is modified to N6-(pyridoxal phosphate)lysine.

Belongs to the SelA family. Pyridoxal 5'-phosphate serves as cofactor.

It localises to the cytoplasm. The catalysed reaction is L-seryl-tRNA(Sec) + selenophosphate + H(+) = L-selenocysteinyl-tRNA(Sec) + phosphate. The protein operates within aminoacyl-tRNA biosynthesis; selenocysteinyl-tRNA(Sec) biosynthesis; selenocysteinyl-tRNA(Sec) from L-seryl-tRNA(Sec) (bacterial route): step 1/1. In terms of biological role, converts seryl-tRNA(Sec) to selenocysteinyl-tRNA(Sec) required for selenoprotein biosynthesis. The chain is L-seryl-tRNA(Sec) selenium transferase from Clostridium botulinum (strain Okra / Type B1).